The following is a 65-amino-acid chain: MLTLKKSMLLLFFLGMVSFSLADDKREDEAEEGEDKRADEGEEKRAAEKKRFLEGLLNTVTGLLG.

A signal peptide spans 1–22; the sequence is MLTLKKSMLLLFFLGMVSFSLA. A propeptide spanning residues 23 to 51 is cleaved from the precursor; the sequence is DDKREDEAEEGEDKRADEGEEKRAAEKKR. The disordered stretch occupies residues 24-45; it reads DKREDEAEEGEDKRADEGEEKR. Leucine 64 is subject to Leucine amide.

This sequence belongs to the frog skin active peptide (FSAP) family. Brevinin subfamily. Expressed by the skin glands.

It localises to the secreted. Functionally, induces contraction of smooth muscle in isolated guinea pig urinary bladder (EC50=4.66 nM). Has no antimicrobial activity against the Gram-positive bacterium S.aureus, the Gram-negative bacterium E.coli and the yeast C.albicans. Elicits histamine release from rat peritoneal mast cells. The protein is Kassorin-M of Phlyctimantis maculatus (Red-legged running frog).